A 343-amino-acid polypeptide reads, in one-letter code: Methionine import ATP-binding protein MetN (343 aa).

An ABC transporter domain is found at 2 to 241 (IKLSNITKVF…PKTPLAQKFI (240 aa)). 38-45 (GASGAGKS) lines the ATP pocket.

The protein belongs to the ABC transporter superfamily. Methionine importer (TC 3.A.1.24) family. As to quaternary structure, the complex is composed of two ATP-binding proteins (MetN), two transmembrane proteins (MetI) and a solute-binding protein (MetQ).

The protein resides in the cell inner membrane. The enzyme catalyses L-methionine(out) + ATP + H2O = L-methionine(in) + ADP + phosphate + H(+). The catalysed reaction is D-methionine(out) + ATP + H2O = D-methionine(in) + ADP + phosphate + H(+). Part of the ABC transporter complex MetNIQ involved in methionine import. Responsible for energy coupling to the transport system. In Escherichia coli O6:K15:H31 (strain 536 / UPEC), this protein is Methionine import ATP-binding protein MetN.